The primary structure comprises 712 residues: Secretin OutD (712 aa).

Residues 1–27 (MLGKGIKKSWGWLGLTVLLLGSPCGWA) form the signal peptide. Residues 28-124 (AEFSASFKGT…LANNEQPGVG (97 aa)) are N0. The segment at 126-190 (ELVTRVVPLN…DIVNTVDKTG (65 aa)) is N1. An N2 region spans residues 191–264 (DREMITVSLN…MIRQLDRKQV (74 aa)). Positions 267–394 (GGTKVIYLKY…DLEQVINQLD (128 aa)) are N3. The disordered stretch occupies residues 288–342 (GNGTSGNRNSSSTNSSRPSSTRSSSTLNNSNSSSSGSSSGSGSSSSSSSSSMGFG). The segment at 399 to 651 (QVLVEAIIAE…LFLRPTIIRD (253 aa)) is secretin. The tract at residues 653-712 (QQYQQASISKYNSFNNEQQQQRGQGNSVLDNNTLRLSGGNTYTFRQVQSSISAFYQPEGR) is s domain.

It belongs to the bacterial secretin family. GSP D subfamily. As to quaternary structure, forms a cylindrical channel with 15 subunits.

The protein resides in the cell outer membrane. Its function is as follows. Involved in a type II secretion system (T2SS, formerly general secretion pathway, GSP) for the export of proteins. Required for the translocation of the multiple pectic enzymes. This subunit forms the outer membrane channel. The chain is Secretin OutD (outD) from Dickeya chrysanthemi (Pectobacterium chrysanthemi).